A 720-amino-acid polypeptide reads, in one-letter code: Phosphoribosylformylglycinamidine synthase subunit PurL (720 aa).

His-47 is an active-site residue. ATP contacts are provided by Tyr-50 and Lys-89. Glu-91 provides a ligand contact to Mg(2+). Substrate is bound by residues 92–95 and Arg-114; that span reads SHNH. The active-site Proton acceptor is the His-93. Asp-115 is a Mg(2+) binding site. Gln-238 contacts substrate. Asp-266 lines the Mg(2+) pocket. 310 to 312 contributes to the substrate binding site; sequence ESQ. Positions 488 and 525 each coordinate ATP. Asn-526 provides a ligand contact to Mg(2+). Ser-528 contacts substrate.

It belongs to the FGAMS family. As to quaternary structure, monomer. Part of the FGAM synthase complex composed of 1 PurL, 1 PurQ and 2 PurS subunits.

It localises to the cytoplasm. The catalysed reaction is N(2)-formyl-N(1)-(5-phospho-beta-D-ribosyl)glycinamide + L-glutamine + ATP + H2O = 2-formamido-N(1)-(5-O-phospho-beta-D-ribosyl)acetamidine + L-glutamate + ADP + phosphate + H(+). It functions in the pathway purine metabolism; IMP biosynthesis via de novo pathway; 5-amino-1-(5-phospho-D-ribosyl)imidazole from N(2)-formyl-N(1)-(5-phospho-D-ribosyl)glycinamide: step 1/2. Its function is as follows. Part of the phosphoribosylformylglycinamidine synthase complex involved in the purines biosynthetic pathway. Catalyzes the ATP-dependent conversion of formylglycinamide ribonucleotide (FGAR) and glutamine to yield formylglycinamidine ribonucleotide (FGAM) and glutamate. The FGAM synthase complex is composed of three subunits. PurQ produces an ammonia molecule by converting glutamine to glutamate. PurL transfers the ammonia molecule to FGAR to form FGAM in an ATP-dependent manner. PurS interacts with PurQ and PurL and is thought to assist in the transfer of the ammonia molecule from PurQ to PurL. The protein is Phosphoribosylformylglycinamidine synthase subunit PurL of Cereibacter sphaeroides (strain ATCC 17023 / DSM 158 / JCM 6121 / CCUG 31486 / LMG 2827 / NBRC 12203 / NCIMB 8253 / ATH 2.4.1.) (Rhodobacter sphaeroides).